We begin with the raw amino-acid sequence, 66 residues long: Large ribosomal subunit protein uL29 (66 aa).

It belongs to the universal ribosomal protein uL29 family.

This chain is Large ribosomal subunit protein uL29, found in Helicobacter pylori (strain P12).